Here is a 254-residue protein sequence, read N- to C-terminus: Phosphoribosylaminoimidazole-succinocarboxamide synthase (254 aa).

Belongs to the SAICAR synthetase family.

The enzyme catalyses 5-amino-1-(5-phospho-D-ribosyl)imidazole-4-carboxylate + L-aspartate + ATP = (2S)-2-[5-amino-1-(5-phospho-beta-D-ribosyl)imidazole-4-carboxamido]succinate + ADP + phosphate + 2 H(+). Its pathway is purine metabolism; IMP biosynthesis via de novo pathway; 5-amino-1-(5-phospho-D-ribosyl)imidazole-4-carboxamide from 5-amino-1-(5-phospho-D-ribosyl)imidazole-4-carboxylate: step 1/2. The chain is Phosphoribosylaminoimidazole-succinocarboxamide synthase from Brucella canis (strain ATCC 23365 / NCTC 10854 / RM-666).